A 397-amino-acid polypeptide reads, in one-letter code: uncharacterized protein (397 aa).

2 positions are modified to phosphoserine: Ser-115 and Ser-141. Residues 135-156 form a disordered region; that stretch reads NSLNHDSPPHTPARRSDNSTSK. Lys-239 participates in a covalent cross-link: Glycyl lysine isopeptide (Lys-Gly) (interchain with G-Cter in SUMO2). Phosphoserine is present on residues Ser-269 and Ser-296. The segment at 289-316 is disordered; the sequence is GRGPTKASPQPALTVKAKATSSATTLAS. A compositionally biased stretch (low complexity) spans 300–316; it reads ALTVKAKATSSATTLAS. Phosphoserine is present on Ser-342. Positions 354-397 are disordered; the sequence is SEAQDSQVTSTKSPTVRCIVPDPPAPLASQRPPRRRWRRTCKDC. A compositionally biased stretch (polar residues) spans 356–367; that stretch reads AQDSQVTSTKSP. Over residues 385-397 the composition is skewed to basic residues; sequence PPRRRWRRTCKDC.

This is an uncharacterized protein from Rattus norvegicus (Rat).